The primary structure comprises 101 residues: UPF0235 protein MmarC5_0538 (101 aa).

This sequence belongs to the UPF0235 family.

The polypeptide is UPF0235 protein MmarC5_0538 (Methanococcus maripaludis (strain C5 / ATCC BAA-1333)).